A 76-amino-acid polypeptide reads, in one-letter code: Bowman-Birk type proteinase inhibitor DE-3 (76 aa).

Disulfide bonds link Cys16/Cys70, Cys17/Cys32, Cys20/Cys66, Cys22/Cys30, Cys40/Cys47, Cys44/Cys59, and Cys49/Cys57.

Belongs to the Bowman-Birk serine protease inhibitor family.

This Macrotyloma axillare (Perennial horse gram) protein is Bowman-Birk type proteinase inhibitor DE-3.